Here is a 347-residue protein sequence, read N- to C-terminus: S-adenosylmethionine:tRNA ribosyltransferase-isomerase (347 aa).

It belongs to the QueA family. In terms of assembly, monomer.

Its subcellular location is the cytoplasm. It catalyses the reaction 7-aminomethyl-7-carbaguanosine(34) in tRNA + S-adenosyl-L-methionine = epoxyqueuosine(34) in tRNA + adenine + L-methionine + 2 H(+). The protein operates within tRNA modification; tRNA-queuosine biosynthesis. Its function is as follows. Transfers and isomerizes the ribose moiety from AdoMet to the 7-aminomethyl group of 7-deazaguanine (preQ1-tRNA) to give epoxyqueuosine (oQ-tRNA). The polypeptide is S-adenosylmethionine:tRNA ribosyltransferase-isomerase (Xylella fastidiosa (strain M12)).